A 188-amino-acid polypeptide reads, in one-letter code: Pyridoxal 5'-phosphate synthase subunit PdxT (188 aa).

47-49 (GES) lines the L-glutamine pocket. Cys-79 (nucleophile) is an active-site residue. L-glutamine is bound by residues Arg-105 and 134–135 (IR). Residues His-170 and Glu-172 each act as charge relay system in the active site.

It belongs to the glutaminase PdxT/SNO family. As to quaternary structure, in the presence of PdxS, forms a dodecamer of heterodimers. Only shows activity in the heterodimer.

It carries out the reaction aldehydo-D-ribose 5-phosphate + D-glyceraldehyde 3-phosphate + L-glutamine = pyridoxal 5'-phosphate + L-glutamate + phosphate + 3 H2O + H(+). The catalysed reaction is L-glutamine + H2O = L-glutamate + NH4(+). It functions in the pathway cofactor biosynthesis; pyridoxal 5'-phosphate biosynthesis. Catalyzes the hydrolysis of glutamine to glutamate and ammonia as part of the biosynthesis of pyridoxal 5'-phosphate. The resulting ammonia molecule is channeled to the active site of PdxS. The polypeptide is Pyridoxal 5'-phosphate synthase subunit PdxT (Listeria innocua serovar 6a (strain ATCC BAA-680 / CLIP 11262)).